Here is a 121-residue protein sequence, read N- to C-terminus: Large ribosomal subunit protein eL18 (121 aa).

The protein belongs to the eukaryotic ribosomal protein eL18 family.

The sequence is that of Large ribosomal subunit protein eL18 from Methanosphaerula palustris (strain ATCC BAA-1556 / DSM 19958 / E1-9c).